The following is a 146-amino-acid chain: Vascular endothelial growth factor A (146 aa).

The first 26 residues, 1–26 (MNFLLSWVHWSLALLLYLHHAKWSQA), serve as a signal peptide directing secretion. 3 disulfides stabilise this stretch: C51–C93, C82–C127, and C86–C129. A glycan (N-linked (GlcNAc...) asparagine) is linked at N100.

The protein belongs to the PDGF/VEGF growth factor family. Homodimer; disulfide-linked. Also found as heterodimer with PGF. Interacts with NRP1. Interacts with isoform 2 of BSG. Interacts with CD82; this interaction inhibits VEGFA-mediated signaling pathway.

In terms of biological role, growth factor active in angiogenesis, vasculogenesis and endothelial cell growth. Induces endothelial cell proliferation, promotes cell migration, inhibits apoptosis and induces permeabilization of blood vessels. Binds to the FLT1/VEGFR1 and KDR/VEGFR2 receptors, heparan sulfate and heparin. Binding to NRP1 receptor initiates a signaling pathway needed for motor neuron axon guidance and cell body migration, including for the caudal migration of facial motor neurons from rhombomere 4 to rhombomere 6 during embryonic development. Also binds the DEAR/FBXW7-AS1 receptor. In Ovis aries (Sheep), this protein is Vascular endothelial growth factor A (VEGFA).